The sequence spans 94 residues: FXYD domain-containing ion transport regulator 6 (94 aa).

An N-terminal signal peptide occupies residues 1-17 (METVLVLCSLLAPVVLA). Topologically, residues 18 to 34 (SAAEKEKEKDPFYYDYQ) are extracellular. Residues 35-57 (TLRIGGLVFAVVLFSVGILLILS) traverse the membrane as a helical segment. Over 58–94 (RRCKCSFNQKPRAPGDEEAQVENLITTNAAEPQKAEN) the chain is Cytoplasmic.

The protein belongs to the FXYD family. As to quaternary structure, regulatory subunit of the sodium/potassium-transporting ATPase which is composed of a catalytic alpha subunit, a non-catalytic beta subunit and an additional regulatory subunit. The regulatory subunit, a member of the FXYD protein family, modulates the enzymatic activity in a tissue- and isoform-specific way by changing affinities of the Na+/K+-ATPase toward Na(+), K(+) or ATP.

It localises to the cell membrane. Functionally, associates with and regulates the activity of the sodium/potassium-transporting ATPase (NKA) which catalyzes the hydrolysis of ATP coupled with the exchange of Na(+) and K(+) ions across the plasma membrane. Reduces the apparent affinity for intracellular Na(+) with no change in the apparent affinity for extracellular K(+). In addition to modulating NKA kinetics, may also function as a regulator of NKA localization to the plasma membrane. The chain is FXYD domain-containing ion transport regulator 6 (Fxyd6) from Mus musculus (Mouse).